A 270-amino-acid chain; its full sequence is Sulfur carrier protein FdhD (270 aa).

Cys-116 (cysteine persulfide intermediate) is an active-site residue. 253–258 (FAREGK) provides a ligand contact to Mo-bis(molybdopterin guanine dinucleotide).

It belongs to the FdhD family.

The protein resides in the cytoplasm. Functionally, required for formate dehydrogenase (FDH) activity. Acts as a sulfur carrier protein that transfers sulfur from IscS to the molybdenum cofactor prior to its insertion into FDH. In Haemophilus influenzae (strain ATCC 51907 / DSM 11121 / KW20 / Rd), this protein is Sulfur carrier protein FdhD.